Reading from the N-terminus, the 214-residue chain is Cytochrome c biogenesis ATP-binding export protein CcmA (214 aa).

The ABC transporter domain maps to 12-214; sequence LAARALAFSR…TRMLTLEAAA (203 aa). ATP is bound at residue 44-51; the sequence is GDNGAGKT.

This sequence belongs to the ABC transporter superfamily. CcmA exporter (TC 3.A.1.107) family. As to quaternary structure, the complex is composed of two ATP-binding proteins (CcmA) and two transmembrane proteins (CcmB).

It localises to the cell inner membrane. It catalyses the reaction heme b(in) + ATP + H2O = heme b(out) + ADP + phosphate + H(+). Its function is as follows. Part of the ABC transporter complex CcmAB involved in the biogenesis of c-type cytochromes; once thought to export heme, this seems not to be the case, but its exact role is uncertain. Responsible for energy coupling to the transport system. The sequence is that of Cytochrome c biogenesis ATP-binding export protein CcmA from Xanthomonas campestris pv. campestris (strain 8004).